Here is a 593-residue protein sequence, read N- to C-terminus: Uncoordinated protein 58 (593 aa).

Helical transmembrane passes span 186 to 206, 291 to 311, 320 to 340, 402 to 422, 430 to 450, and 455 to 475; these read VILVSVLIGYLCLGAWILMLL, TFPTALLYVLTVLTTCGYGEV, VFSVAFALVGIPLMFITAADI, PIGAYVSCICLYCSMGSAMFI, FIHAFHFGFNLIVTVGLGDIV, and IFLSLIVAFVIVGLSVVTMCV.

This sequence belongs to the two pore domain potassium channel (TC 1.A.1.8) family.

The protein resides in the membrane. Functionally, has a role in mobility, possibly in the transport of potassium in muscles. This is Uncoordinated protein 58 from Caenorhabditis briggsae.